The sequence spans 256 residues: Stanniocalcin (256 aa).

An N-terminal signal peptide occupies residues 1-18 (MLAKFGLCAVFLVLGTAA). Positions 19 to 33 (TFDTDPEEASPRRAR) are excised as a propeptide. Asn62 carries N-linked (GlcNAc...) asparagine glycosylation.

The protein belongs to the stanniocalcin family. In terms of assembly, homodimer; disulfide-linked. Produced and secreted by the corpuscles of Stannius.

It is found in the secreted. Its function is as follows. Its primary function is the prevention of hypercalcemia. Upon release into the circulation, it lowers calcium transport by the gills, thereby reducing its rate of influx from the environment into the extracellular compartment. STC also stimulates phosphate reabsorption by renal proximal tubules. The consequence of this action is increased levels of plasma phosphate, which combines with excess calcium and promotes its disposal into bone and scales. The sequence is that of Stanniocalcin (stc) from Oncorhynchus kisutch (Coho salmon).